A 329-amino-acid chain; its full sequence is Phenylalanine--tRNA ligase alpha subunit (329 aa).

Glu-254 is a binding site for Mg(2+).

The protein belongs to the class-II aminoacyl-tRNA synthetase family. Phe-tRNA synthetase alpha subunit type 1 subfamily. Tetramer of two alpha and two beta subunits. It depends on Mg(2+) as a cofactor.

Its subcellular location is the cytoplasm. The catalysed reaction is tRNA(Phe) + L-phenylalanine + ATP = L-phenylalanyl-tRNA(Phe) + AMP + diphosphate + H(+). This Haemophilus influenzae (strain ATCC 51907 / DSM 11121 / KW20 / Rd) protein is Phenylalanine--tRNA ligase alpha subunit (pheS).